Reading from the N-terminus, the 881-residue chain is Putative cation exchanger C521.04c (881 aa).

Over residues 1–19 the composition is skewed to polar residues; the sequence is MSQPADINQSESSAETITQ. Disordered regions lie at residues 1–39 and 52–142; these read MSQP…EQNL and ADAT…LRSE. Basic and acidic residues predominate over residues 63 to 77; sequence NDRDIYSPREIDQYT. The segment covering 83 to 95 has biased composition (polar residues); it reads RTDPSTSTISNAR. Positions 99 to 113 are enriched in low complexity; sequence RNSVSRLSRSSSNVR. Position 129 is a phosphoserine (serine 129). The next 8 membrane-spanning stretches (helical) occupy residues 200 to 220, 329 to 349, 407 to 427, 438 to 458, 471 to 491, 504 to 524, 537 to 557, and 594 to 614; these read IWLI…YIFF, LIIA…IFFV, IYII…FGFF, VFLF…IGMA, GAFI…SVAL, IGSI…AGAI, GATS…TMLF, and LPFT…GLWF. Residues 641–717 form a disordered region; sequence VGEPVNQDTA…SQNSHGDDAP (77 aa). Polar residues predominate over residues 646 to 657; that stretch reads NQDTAGNMSDSS. The span at 678–688 shows a compositional bias: low complexity; it reads SSGLSSNGSEN. A run of 5 helical transmembrane segments spans residues 726–746, 762–782, 794–814, 828–848, and 859–879; these read IILL…VEHV, LTLF…SFAL, SAYA…YSLF, LFTM…VFLL, and YFKG…FTFF.

The protein belongs to the Ca(2+):cation antiporter (CaCA) (TC 2.A.19) family.

It localises to the endoplasmic reticulum membrane. In terms of biological role, putative cation exchanger. This Schizosaccharomyces pombe (strain 972 / ATCC 24843) (Fission yeast) protein is Putative cation exchanger C521.04c.